A 320-amino-acid chain; its full sequence is Meso-diaminopimelate D-dehydrogenase (320 aa).

NADP(+)-binding positions include 11 to 14 (YGNL), 35 to 37 (SRR), 65 to 68 (CMGS), 88 to 90 (TYD), and 117 to 121 (TGWDP). Substrate is bound by residues D90, D120, W144, 150–151 (QG), T169, R195, H244, and N270.

Homodimer.

It carries out the reaction meso-2,6-diaminopimelate + NADP(+) + H2O = (S)-2-amino-6-oxoheptanedioate + NH4(+) + NADPH + H(+). Its pathway is amino-acid biosynthesis; L-lysine biosynthesis via DAP pathway; DL-2,6-diaminopimelate from (S)-tetrahydrodipicolinate: step 1/1. With respect to regulation, l,L-2,6-diaminopimelate and D,D-2,6-diaminopimelate competitively inhibit the oxidative deamination of meso-2,6-diaminopimelate. The enzyme is also inhibited by L-cysteine, and by p-chloromercuribenzoate, iodoacetic acid and HgCl(2) in vitro. Its function is as follows. Catalyzes the reversible NADPH-dependent reductive amination of L-2-amino-6-oxopimelate, the acyclic form of L-tetrahydrodipicolinate, to generate the meso compound, D,L-2,6-diaminopimelate. Probably plays a role in lysine biosynthesis. Exhibits a high substrate specificity for meso-2,6-diaminopimelate, since L,L-2,6-diaminopimelate, D,D-2,6-diaminopimelate, L-glutamate, L-alanine, L-leucine, L-valine, L-aspartate, L-threonine, L-homoserine, L-methionine, L-lysine, L-serine, L-phenylalanine, L-tyrosine, L-tryptophan, L-ornithine, L-histidine, L-arginine, D-glutamate, and D-alanine are not substrates for the oxidative deamination reaction. Can use NAD(+) only poorly since the activity observed in the presence of NAD(+) is about 3% of that with NADP(+). The protein is Meso-diaminopimelate D-dehydrogenase (ddh) of Corynebacterium glutamicum (strain ATCC 13032 / DSM 20300 / JCM 1318 / BCRC 11384 / CCUG 27702 / LMG 3730 / NBRC 12168 / NCIMB 10025 / NRRL B-2784 / 534).